A 303-amino-acid polypeptide reads, in one-letter code: Elongation factor Ts (303 aa).

The tract at residues 80 to 83 (TDFV) is involved in Mg(2+) ion dislocation from EF-Tu.

This sequence belongs to the EF-Ts family.

The protein resides in the cytoplasm. Associates with the EF-Tu.GDP complex and induces the exchange of GDP to GTP. It remains bound to the aminoacyl-tRNA.EF-Tu.GTP complex up to the GTP hydrolysis stage on the ribosome. The polypeptide is Elongation factor Ts (Clostridium botulinum (strain Eklund 17B / Type B)).